The following is a 330-amino-acid chain: Diacylglycerol acyltransferase/mycolyltransferase Ag85B (330 aa).

A signal peptide spans 1–40 (MTDLSKKVRAWGRRLLVGTAAAVTLPGLIGLAGGAPTAGA). 82–83 (LR) is a substrate binding site. A fibronectin-binding region spans residues 98 to 108 (FEWYYQSGLSI). Residues C127 and C132 are joined by a disulfide bond. Residues S166 and D194 each coordinate substrate. S166 serves as the catalytic Nucleophile. E270 is a catalytic residue. Residues 272 to 275 (FVRS), K279, and 302 to 304 (HSW) each bind substrate. H302 is a catalytic residue.

This sequence belongs to the mycobacterial A85 antigen family.

Its subcellular location is the secreted. The catalysed reaction is 2 alpha,alpha'-trehalose 6-mycolate = alpha,alpha'-trehalose 6,6'-bismycolate + alpha,alpha-trehalose. It catalyses the reaction an acyl-CoA + a 1,2-diacyl-sn-glycerol = a triacyl-sn-glycerol + CoA. The antigen 85 proteins (FbpA, FbpB, FbpC) are responsible for the high affinity of mycobacteria for fibronectin, a large adhesive glycoprotein, which facilitates the attachment of M.tuberculosis to murine alveolar macrophages (AMs). They also help to maintain the integrity of the cell wall by catalyzing the transfer of mycolic acids to cell wall arabinogalactan and through the synthesis of alpha,alpha-trehalose dimycolate (TDM, cord factor). They catalyze the transfer of a mycoloyl residue from one molecule of alpha,alpha-trehalose monomycolate (TMM) to another TMM, leading to the formation of TDM. In Mycobacterium scrofulaceum, this protein is Diacylglycerol acyltransferase/mycolyltransferase Ag85B (fbpB).